The sequence spans 709 residues: Bud site selection protein 14 (709 aa).

An N-acetylserine modification is found at serine 2. The disordered stretch occupies residues 61–258 (DIINNRPTSG…DYQPLSPPRE (198 aa)). Polar residues-rich tracts occupy residues 62-74 (IINN…SKLT) and 89-107 (VTPT…NILS). Composition is skewed to basic and acidic residues over residues 111 to 123 (EKGH…RDDD) and 131 to 150 (VEKH…KENS). A Phosphotyrosine modification is found at tyrosine 159. Phosphoserine occurs at positions 160 and 162. Residue threonine 177 is modified to Phosphothreonine. Phosphoserine occurs at positions 212 and 222. Acidic residues predominate over residues 212–226 (SEDEDEEENYSDDDD). In terms of domain architecture, SH3 spans 259-320 (LDPDKLYALY…PAEILETFPE (62 aa)). Residues 334-367 (SSQSVASSDSKDDSISSGNKNQSDAESIIPTPAL) form a disordered region. Phosphoserine occurs at positions 376, 378, and 401. Over residues 396-406 (DTSLDSNDDGG) the composition is skewed to acidic residues. Disordered stretches follow at residues 396–421 (DTSL…DNDK), 464–510 (NVKK…SDYD), 525–571 (ANGM…SSRA), and 600–680 (ASLG…PASK). Residues 470 to 504 (RQDNKNESEPKTSSSKDREDDYNANRYVGQEKSEP) are compositionally biased toward basic and acidic residues. Serine 507 carries the post-translational modification Phosphoserine. The span at 531–552 (SDSQNSLSTIGEFSPSSSEWTN) shows a compositional bias: polar residues. A compositionally biased stretch (low complexity) spans 553 to 569 (ESPSTPIVEESSSIPSS). The span at 600–614 (ASLGSSGGMANQTDA) shows a compositional bias: polar residues. Residues 615–633 (EQPKEELEKHHSTPEEEKQ) are compositionally biased toward basic and acidic residues. 3 positions are modified to phosphoserine: serine 655, serine 658, and serine 670. Over residues 655–671 (SSASINSSLSGSRALSN) the composition is skewed to low complexity.

As to quaternary structure, interacts with GLC7.

Its function is as follows. Important for bud site selection. Seems to be a regulatory subunit of the BUD14-GLC7 type-I phosphatase complex. The BUD14-GLC7 complex is necessary to regulate microtubule dynamics at the cortex and may function as a specific activator of the dynein complex. This chain is Bud site selection protein 14 (BUD14), found in Saccharomyces cerevisiae (strain ATCC 204508 / S288c) (Baker's yeast).